Consider the following 54-residue polypeptide: Preprotein translocase subunit SecG (54 aa).

Topologically, residues 1 to 31 are cytoplasmic; it reads MSSGSNSGGLMSSAGLVRYFDSEDRDAIAID. Residues 32–53 traverse the membrane as a helical segment; the sequence is PKTVLAFCVLFGVFVQILSLTV. Position 54 (alanine 54) is a topological domain, extracellular.

Belongs to the SEC61-beta family. Component of the protein translocase complex. Heterotrimer consisting of alpha (SecY), beta (SecG) and gamma (SecE) subunits. Can form oligomers of the heterotrimer.

It is found in the cell membrane. In terms of biological role, involved in protein export. The function of the beta subunit is unknown, but it may be involved in stabilization of the trimeric complex. In Halorubrum lacusprofundi (strain ATCC 49239 / DSM 5036 / JCM 8891 / ACAM 34), this protein is Preprotein translocase subunit SecG.